Consider the following 144-residue polypeptide: Actin-associated protein FAM107A (144 aa).

Positions 70–90 form a coiled coil; sequence VLEHRRRNQLIKKKEEELEAK. Positions 74–84 match the Nuclear localization signal motif; that stretch reads RRRNQLIKKKE. A disordered region spans residues 104–123; sequence QQRLNQLENPPQRDEDHAPE. The segment covering 114–123 has biased composition (basic and acidic residues); it reads PQRDEDHAPE.

Interacts with ACTB. Interacts with F-actin. Interacts with PRDX1. Interacts with COMMD1; this interaction stabilizes COMMD1 in the nucleus. Interacts with MAP1A. As to expression, expressed in septum, the neocortex, the CA3 region of the hippocampus and the cerebellum (at protein level).

The protein localises to the nucleus. The protein resides in the cytoplasm. Its subcellular location is the cytoskeleton. It localises to the stress fiber. It is found in the cell junction. The protein localises to the focal adhesion. The protein resides in the cell projection. Its subcellular location is the ruffle membrane. It localises to the synapse. Its function is as follows. Stress-inducible actin-binding protein that plays a role in synaptic and cognitive functions by modulating actin filamentous (F-actin) dynamics. Mediates polymerization of globular actin to F-actin. Also binds to, stabilizes and bundles F-actin. Involved in synaptic function by regulating neurite outgrowth in an actin-dependent manner and for the acquisition of hippocampus-dependent cognitive function, such as learning and long-term memory. Plays a role in the actin and microtubule cytoskeleton organization; negatively regulates focal adhesion (FA) assembly promoting malignant glial cell migration in an actin-, microtubule- and MAP1A-dependent manner. Also involved in neuroblastoma G1/S phase cell cycle progression and cell proliferation inhibition by stimulating ubiquitination of NF-kappa-B subunit RELA and NF-kappa-B degradation in a COMMD1- and actin-dependent manner. May play a role in tumor development. In Mus musculus (Mouse), this protein is Actin-associated protein FAM107A.